The chain runs to 177 residues: Crossover junction endodeoxyribonuclease RuvC (177 aa).

Catalysis depends on residues D7, E68, and D141. Mg(2+)-binding residues include D7, E68, and D141.

This sequence belongs to the RuvC family. As to quaternary structure, homodimer which binds Holliday junction (HJ) DNA. The HJ becomes 2-fold symmetrical on binding to RuvC with unstacked arms; it has a different conformation from HJ DNA in complex with RuvA. In the full resolvosome a probable DNA-RuvA(4)-RuvB(12)-RuvC(2) complex forms which resolves the HJ. Mg(2+) serves as cofactor.

Its subcellular location is the cytoplasm. It carries out the reaction Endonucleolytic cleavage at a junction such as a reciprocal single-stranded crossover between two homologous DNA duplexes (Holliday junction).. The RuvA-RuvB-RuvC complex processes Holliday junction (HJ) DNA during genetic recombination and DNA repair. Endonuclease that resolves HJ intermediates. Cleaves cruciform DNA by making single-stranded nicks across the HJ at symmetrical positions within the homologous arms, yielding a 5'-phosphate and a 3'-hydroxyl group; requires a central core of homology in the junction. The consensus cleavage sequence is 5'-(A/T)TT(C/G)-3'. Cleavage occurs on the 3'-side of the TT dinucleotide at the point of strand exchange. HJ branch migration catalyzed by RuvA-RuvB allows RuvC to scan DNA until it finds its consensus sequence, where it cleaves and resolves the cruciform DNA. The polypeptide is Crossover junction endodeoxyribonuclease RuvC (Nocardioides sp. (strain ATCC BAA-499 / JS614)).